A 421-amino-acid chain; its full sequence is MVADVLLTHFNQLFCLNDPGHPLTGQEMKKATIVEDGYIAIKDGLIVALGSGEPDAELVGPQTIMRSYKGKIATPGIIDCHTHLVYGGSREHEFAKKLAGVSYLDILAQGGGILSTVRATRSASFDNLYQKSKRLLDYMLLHGVTTVEAKSGYGLDWETEKRQLDVVAALEKDHPIDLVSTFMAAHAIPEEYKGNPKAYLDVIIKDMLPVVKEENLAEFCDIFCEKNVFTADESRYLLSKAKEMGFKLRIHADEIASIGGVDVAAELSAVSAEHLMMITDDGIAKLIGAGVIGNLLPATTFSLMEDTYAPARKMIDAGMAITLSTDSNPGSCPTANMQFVMQLGCFMLRLTPLEVLNAVTINAAYSVNRQERVGSLTVGKEADIAIFDAPNIDYPFYFFATNLIHQVYKKGQLTVDRGRIL.

Fe(3+)-binding residues include histidine 81 and histidine 83. Positions 81 and 83 each coordinate Zn(2+). Residues arginine 90, tyrosine 153, and histidine 186 each contribute to the 4-imidazolone-5-propanoate site. Tyrosine 153 contributes to the N-formimidoyl-L-glutamate binding site. Histidine 251 is a binding site for Fe(3+). Residue histidine 251 participates in Zn(2+) binding. Glutamate 254 provides a ligand contact to 4-imidazolone-5-propanoate. Aspartate 326 provides a ligand contact to Fe(3+). Aspartate 326 contacts Zn(2+). The N-formimidoyl-L-glutamate site is built by asparagine 328 and glycine 330. A 4-imidazolone-5-propanoate-binding site is contributed by serine 331.

This sequence belongs to the metallo-dependent hydrolases superfamily. HutI family. Requires Zn(2+) as cofactor. Fe(3+) serves as cofactor.

It localises to the cytoplasm. The enzyme catalyses 4-imidazolone-5-propanoate + H2O = N-formimidoyl-L-glutamate. It participates in amino-acid degradation; L-histidine degradation into L-glutamate; N-formimidoyl-L-glutamate from L-histidine: step 3/3. Its function is as follows. Catalyzes the hydrolytic cleavage of the carbon-nitrogen bond in imidazolone-5-propanoate to yield N-formimidoyl-L-glutamate. It is the third step in the universal histidine degradation pathway. The sequence is that of Imidazolonepropionase from Streptococcus pyogenes serotype M2 (strain MGAS10270).